The primary structure comprises 329 residues: D-lactate dehydrogenase (329 aa).

NAD(+) is bound by residues lysine 154–isoleucine 155, aspartate 174, cysteine 205–proline 206, asparagine 211, threonine 232–arginine 234, and aspartate 258. The active site involves arginine 234. Residue glutamate 263 is part of the active site. Histidine 295 serves as the catalytic Proton donor.

Belongs to the D-isomer specific 2-hydroxyacid dehydrogenase family.

The enzyme catalyses (R)-lactate + NAD(+) = pyruvate + NADH + H(+). Fermentative lactate dehydrogenase. The sequence is that of D-lactate dehydrogenase (ldhA) from Escherichia coli (strain K12).